We begin with the raw amino-acid sequence, 2336 residues long: RNA1 polyprotein (2336 aa).

Topologically, residues 599–1210 (QVARIARNIF…YLKEHGLEVL (612 aa)) are cytoplasmic. The SF3 helicase domain maps to 797–964 (MKDLLDLQQR…PGVVFDPMDC (168 aa)). 827-834 (GPSHCGKS) serves as a coordination point for ATP. A helical transmembrane segment spans residues 1211–1231 (LLLAAMMILCVALYYFVGAFI). Topologically, residues 1232-1253 (GVMGGALSMGAAMAGLKEVDMK) are lumenal. Residues 1278-1486 (YARGELDEEV…WADNLPNPCM (209 aa)) enclose the Peptidase C3 domain. Residues His-1320, Glu-1358, and Cys-1450 each act as for picornain 3C-like protease activity in the active site. The region spanning 1771 to 1899 (DRAINCDYSS…SCTDKIAIYF (129 aa)) is the RdRp catalytic domain.

The protein belongs to the nepoviruses RNA1 polyprotein family. Post-translationally, specific enzymatic cleavages by picornain 3C-like protease in vivo yield mature proteins. Picornain 3C-like protease is autocatalytically processed. VPg is uridylylated by the polymerase and is covalently linked to the 5'-end of genomic RNA. This uridylylated form acts as a nucleotide-peptide primer for the polymerase.

Its subcellular location is the host endoplasmic reticulum lumen. The protein resides in the host endoplasmic reticulum membrane. The enzyme catalyses RNA(n) + a ribonucleoside 5'-triphosphate = RNA(n+1) + diphosphate. Functionally, picornain 3C-like protease is a thiol protease that cleaves the P1 and P2 polyproteins. The protein is RNA1 polyprotein of Cycas necrotic stunt virus (CNSV).